A 162-amino-acid chain; its full sequence is Scytalone dehydratase-like protein claB (162 aa).

Tyrosine 48 lines the substrate pocket. Active-site residues include histidine 83 and histidine 108.

This sequence belongs to the scytalone dehydratase family.

It participates in pigment biosynthesis. Scytalone dehydratase-like protein; part of the gene cluster that mediates the biosynthesis of the bianthraquinone cladofulvin, a conidial pigment not required for virulence but that plays a role in fitness and resistance to environmental stresses including UV light and low-temperature stress. The pathway begins with the synthesis of atrochrysone thioester by the polyketide synthase (PKS) claG. The atrochrysone carboxyl ACP thioesterase claF then breaks the thioester bond and releases the atrochrysone carboxylic acid from claG. This compound is decarboxylated by claH to yield emodin, which is further converted to chrysophanol hydroquinone by the reductase claC and the dehydratase claB. The cytochrome P450 monooxygenase claM then catalyzes the dimerization of nataloe-emodin to cladofulvin. This Passalora fulva (Tomato leaf mold) protein is Scytalone dehydratase-like protein claB.